The sequence spans 413 residues: UPF0754 membrane protein PCC7424_0748 (413 aa).

2 consecutive transmembrane segments (helical) span residues 3 to 23 and 391 to 411; these read IALELSTIWTIALPPITGAII and IVNLGGILGFFVGTIQTVILL.

The protein belongs to the UPF0754 family.

It localises to the cell inner membrane. The sequence is that of UPF0754 membrane protein PCC7424_0748 from Gloeothece citriformis (strain PCC 7424) (Cyanothece sp. (strain PCC 7424)).